The chain runs to 567 residues: Thiol:disulfide interchange protein DsbD (567 aa).

Positions 1–19 are cleaved as a signal peptide; it reads MAQRIFTLILLLCSTSAFA. 2 disulfides stabilise this stretch: Cys122-Cys128 and Cys185-Cys307. Transmembrane regions (helical) follow at residues 166-186, 211-231, 246-266, 299-319, 326-346, 360-380, 387-407, and 418-438; these read LPFS…TPCV, LLAF…GLVV, YVLI…FGLF, IAGL…LLYI, WLGG…LMLV, WMAH…VFLL, AWGL…AFIT, and IVQI…QDWA. A Thioredoxin domain is found at 435 to 567; that stretch reads QDWAFGSPSA…FSAHLHDRQP (133 aa). Cys482 and Cys485 form a disulfide bridge.

This sequence belongs to the thioredoxin family. DsbD subfamily.

Its subcellular location is the cell inner membrane. The catalysed reaction is [protein]-dithiol + NAD(+) = [protein]-disulfide + NADH + H(+). The enzyme catalyses [protein]-dithiol + NADP(+) = [protein]-disulfide + NADPH + H(+). Required to facilitate the formation of correct disulfide bonds in some periplasmic proteins and for the assembly of the periplasmic c-type cytochromes. Acts by transferring electrons from cytoplasmic thioredoxin to the periplasm. This transfer involves a cascade of disulfide bond formation and reduction steps. The sequence is that of Thiol:disulfide interchange protein DsbD from Salmonella paratyphi A (strain ATCC 9150 / SARB42).